The sequence spans 651 residues: DNA topoisomerase 3 (651 aa).

In terms of domain architecture, Toprim spans 1-134 (MRLFIAEKPS…KRDKILRCLI (134 aa)). Residues Glu-7, Asp-103, and Asp-105 each coordinate Mg(2+). Residues 155–612 (FIPLATSALA…NLNQILPDLV (458 aa)) enclose the Topo IA-type catalytic domain. The interaction with DNA stretch occupies residues 194-199 (SVGRVQ). Tyr-337 acts as the O-(5'-phospho-DNA)-tyrosine intermediate in catalysis. Positions 631 to 651 (SDRAKPKSAVKKSSKSNGETD) are disordered.

The protein belongs to the type IA topoisomerase family. Requires Mg(2+) as cofactor.

It carries out the reaction ATP-independent breakage of single-stranded DNA, followed by passage and rejoining.. Its function is as follows. Releases the supercoiling and torsional tension of DNA, which is introduced during the DNA replication and transcription, by transiently cleaving and rejoining one strand of the DNA duplex. Introduces a single-strand break via transesterification at a target site in duplex DNA. The scissile phosphodiester is attacked by the catalytic tyrosine of the enzyme, resulting in the formation of a DNA-(5'-phosphotyrosyl)-enzyme intermediate and the expulsion of a 3'-OH DNA strand. The free DNA strand then undergoes passage around the unbroken strand, thus removing DNA supercoils. Finally, in the religation step, the DNA 3'-OH attacks the covalent intermediate to expel the active-site tyrosine and restore the DNA phosphodiester backbone. This chain is DNA topoisomerase 3, found in Haemophilus influenzae (strain ATCC 51907 / DSM 11121 / KW20 / Rd).